The sequence spans 533 residues: Protein trichome birefringence-like 18 (533 aa).

A helical; Signal-anchor for type II membrane protein membrane pass occupies residues 21-41; it reads VSTVAIAIGGLASFFVFGLLL. A disordered region spans residues 93 to 171; that stretch reads SDSSSGLPVV…PDDVSETASA (79 aa). Over residues 113–154 the composition is skewed to basic and acidic residues; sequence SSDRKLETPLTQEKEDLVSSDITEKTDVQSGERETNVSKAED. Positions 248–250 match the GDS motif motif; that stretch reads GDS. Residues 475 to 502 form a disordered region; it reads HDGHPGPFRSPDPNKITKRGPDGRPPPQ. A DCXHWCLPGXXDXWN motif motif is present at residues 503-517; sequence DCLHWCMPGPVDTWN.

Belongs to the PC-esterase family. TBL subfamily.

It localises to the membrane. May act as a bridging protein that binds pectin and other cell wall polysaccharides. Probably involved in maintaining esterification of pectins. May be involved in the specific O-acetylation of cell wall polymers. This Arabidopsis thaliana (Mouse-ear cress) protein is Protein trichome birefringence-like 18 (TBL18).